Here is a 1190-residue protein sequence, read N- to C-terminus: DNA-directed RNA polymerase subunit beta (1190 aa).

The protein belongs to the RNA polymerase beta chain family. As to quaternary structure, the RNAP catalytic core consists of 2 alpha, 1 beta, 1 beta' and 1 omega subunit. When a sigma factor is associated with the core the holoenzyme is formed, which can initiate transcription.

The enzyme catalyses RNA(n) + a ribonucleoside 5'-triphosphate = RNA(n+1) + diphosphate. Functionally, DNA-dependent RNA polymerase catalyzes the transcription of DNA into RNA using the four ribonucleoside triphosphates as substrates. The chain is DNA-directed RNA polymerase subunit beta from Streptococcus suis (strain 98HAH33).